The chain runs to 265 residues: 4-hydroxy-tetrahydrodipicolinate reductase (265 aa).

Residues 7–12 and D33 each bind NAD(+); that span reads GASGRM. R34 contributes to the NADP(+) binding site. Residues 96–98 and 120–123 contribute to the NAD(+) site; these read GTT and AANM. H153 serves as the catalytic Proton donor/acceptor. H154 contributes to the (S)-2,3,4,5-tetrahydrodipicolinate binding site. The active-site Proton donor is the K157. 163-164 contributes to the (S)-2,3,4,5-tetrahydrodipicolinate binding site; the sequence is GT.

Belongs to the DapB family.

Its subcellular location is the cytoplasm. The catalysed reaction is (S)-2,3,4,5-tetrahydrodipicolinate + NAD(+) + H2O = (2S,4S)-4-hydroxy-2,3,4,5-tetrahydrodipicolinate + NADH + H(+). It catalyses the reaction (S)-2,3,4,5-tetrahydrodipicolinate + NADP(+) + H2O = (2S,4S)-4-hydroxy-2,3,4,5-tetrahydrodipicolinate + NADPH + H(+). It functions in the pathway amino-acid biosynthesis; L-lysine biosynthesis via DAP pathway; (S)-tetrahydrodipicolinate from L-aspartate: step 4/4. Its function is as follows. Catalyzes the conversion of 4-hydroxy-tetrahydrodipicolinate (HTPA) to tetrahydrodipicolinate. The sequence is that of 4-hydroxy-tetrahydrodipicolinate reductase from Burkholderia orbicola (strain AU 1054).